The chain runs to 251 residues: Tritrans,polycis-undecaprenyl-diphosphate synthase (geranylgeranyl-diphosphate specific) (251 aa).

The active site involves D29. D29 is a Mg(2+) binding site. Substrate-binding positions include 30 to 33 (GNRR), F34, H46, and 74 to 76 (STE). Residue N77 is the Proton acceptor of the active site. Residues F78, R80, R200, and 206 to 208 (RLS) each bind substrate.

The protein belongs to the UPP synthase family. In terms of assembly, homodimer. Mg(2+) serves as cofactor.

It catalyses the reaction geranylgeranyl diphosphate + 7 isopentenyl diphosphate = tri-trans,hepta-cis-undecaprenyl diphosphate + 7 diphosphate. Catalyzes the sequential condensation of isopentenyl diphosphate (IPP) with geranylgeranyl diphosphate (GGPP) to yield (2Z,6Z,10Z,14Z,18Z,22Z,26Z,30E,34E,38E)-undecaprenyl diphosphate (tritrans,heptacis-UPP). It is probably the precursor of glycosyl carrier lipids. The chain is Tritrans,polycis-undecaprenyl-diphosphate synthase (geranylgeranyl-diphosphate specific) from Archaeoglobus fulgidus (strain ATCC 49558 / DSM 4304 / JCM 9628 / NBRC 100126 / VC-16).